The sequence spans 335 residues: MKVVINGFGRIGRLVLRQILKRNSSVEVLAINDLVPGDALTYLFKFDSTHGRFPEDVRCEADHLIVGKRKIQFLSERNVQNLPWKDLGVDLVIECTGLFTKKEDAEKHIQAGAKRVLISAPGKGDIPTFVMGVNHKTFNPEKDFVISNASCTTNCLAPIAKVLLDNFGITEGLMTTVHAATATQLVVDGPSKKDWRGGRGCLQNIIPASTGAAKAVTLCLPELKGKLTGMAFRVPIEDVSVVDLTVRLDKSTTYDDICKAMKQASETDLKGILDYTDEQVVSSDFIGSEYSSIFDALAGIALNDRFFKLVAWYDNETGYATRIVDLLEYVEKNSK.

NAD(+) is bound by residues 10-11 (RI), Asp33, Arg77, and Ser119. Residues 150 to 152 (SCT), Thr181, 210 to 211 (TG), and Arg233 contribute to the D-glyceraldehyde 3-phosphate site. Cys151 acts as the Nucleophile in catalysis. Asn315 lines the NAD(+) pocket.

It belongs to the glyceraldehyde-3-phosphate dehydrogenase family. Homotetramer.

The protein localises to the cytoplasm. The catalysed reaction is D-glyceraldehyde 3-phosphate + phosphate + NAD(+) = (2R)-3-phospho-glyceroyl phosphate + NADH + H(+). It participates in carbohydrate degradation; glycolysis; pyruvate from D-glyceraldehyde 3-phosphate: step 1/5. Catalyzes the oxidative phosphorylation of glyceraldehyde 3-phosphate (G3P) to 1,3-bisphosphoglycerate (BPG) using the cofactor NAD. The first reaction step involves the formation of a hemiacetal intermediate between G3P and a cysteine residue, and this hemiacetal intermediate is then oxidized to a thioester, with concomitant reduction of NAD to NADH. The reduced NADH is then exchanged with the second NAD, and the thioester is attacked by a nucleophilic inorganic phosphate to produce BPG. The polypeptide is Glyceraldehyde-3-phosphate dehydrogenase (gap) (Chlamydia pneumoniae (Chlamydophila pneumoniae)).